The primary structure comprises 226 residues: Probable functional amyloid protease FapD (226 aa).

The first 18 residues, 1 to 18, serve as a signal peptide directing secretion; that stretch reads MRTLILSLLLLVDLTTQA. The region spanning 50–180 is the Peptidase C39 domain; that stretch reads QKTDFSCGAA…KGWNGIVFAV (131 aa). Residue cysteine 56 is part of the active site.

Belongs to the FapD family.

It localises to the periplasm. Probable protease that might be involved in processing fibril precursors. Upon overexpression of the endogenous six-gene locus (fapA-fapF), cells form large clumps during liquid growth, make large amounts of biofilm and produce amyloid fibrils. The chain is Probable functional amyloid protease FapD from Pseudomonas aeruginosa (strain ATCC 15692 / DSM 22644 / CIP 104116 / JCM 14847 / LMG 12228 / 1C / PRS 101 / PAO1).